The primary structure comprises 166 residues: Succinate dehydrogenase [ubiquinone] cytochrome b small subunit, mitochondrial (166 aa).

The Mitochondrial matrix portion of the chain corresponds to 1-65 (MASVARSSAL…VPPPSPSHGS (65 aa)). The chain crosses the membrane as a helical span at residues 66 to 87 (YHWTFDRVVAAGLIPLTVAPFA). Over 88 to 94 (AGSLNPT) the chain is Mitochondrial intermembrane. A helical transmembrane segment spans residues 95 to 115 (MDAVLAATILIHSHTGFGNII). H106 contacts heme. Residues 116–124 (VDYVPSKRV) lie on the Mitochondrial matrix side of the membrane. Y118 lines the a ubiquinone pocket. The helical transmembrane segment at 125-149 (PKARKVFTWGLNAATVLVGLALYEF) threads the bilayer. The Mitochondrial intermembrane portion of the chain corresponds to 150–166 (ETTDVGLTETIKRVWKA).

It belongs to the CybS family. Forms part of complex II containing four subunits: a flavoprotein (FP), an iron-sulfur protein (IP) and a cytochrome b composed of a large and a small subunit.

The protein localises to the mitochondrion inner membrane. It functions in the pathway carbohydrate metabolism; tricarboxylic acid cycle. In terms of biological role, membrane-anchoring subunit of succinate dehydrogenase (SDH) that is involved in complex II of the mitochondrial electron transport chain and is responsible for transferring electrons from succinate to ubiquinone (coenzyme Q). The chain is Succinate dehydrogenase [ubiquinone] cytochrome b small subunit, mitochondrial from Neurospora crassa (strain ATCC 24698 / 74-OR23-1A / CBS 708.71 / DSM 1257 / FGSC 987).